The chain runs to 579 residues: Plastidial pyruvate kinase 2 (579 aa).

Residues M1–R63 constitute a chloroplast transit peptide. Over residues A6 to T24 the composition is skewed to polar residues. A disordered region spans residues A6–S26. R140 is a substrate binding site. K(+) contacts are provided by N142, S144, D175, and T176. N142–H145 contributes to the ATP binding site. R182 is a binding site for ATP. K325 is a substrate binding site. E327 lines the Mg(2+) pocket. Substrate is bound by residues G350, D351, and T383. D351 contributes to the Mg(2+) binding site.

Belongs to the pyruvate kinase family. In terms of assembly, oligomer of alpha and beta subunits. Mg(2+) is required as a cofactor. The cofactor is K(+). As to expression, mostly expressed in seeds, and, to a lower extent, in roots, leaves (veins and trichomes), inflorescences, siliques, pollen (grains and tubes) and flowers (sepals and petals).

Its subcellular location is the plastid. The protein resides in the chloroplast stroma. It is found in the mitochondrion. It carries out the reaction pyruvate + ATP = phosphoenolpyruvate + ADP + H(+). Its pathway is carbohydrate degradation; glycolysis; pyruvate from D-glyceraldehyde 3-phosphate: step 5/5. Its function is as follows. Required for plastidial pyruvate kinase activity. Involved in seed oil accumulation, embryo development and seed storage compounds mobilization upon germination. This Arabidopsis thaliana (Mouse-ear cress) protein is Plastidial pyruvate kinase 2 (PKP2).